The following is a 197-amino-acid chain: Large ribosomal subunit protein bL25 (197 aa).

The protein belongs to the bacterial ribosomal protein bL25 family. CTC subfamily. Part of the 50S ribosomal subunit; part of the 5S rRNA/L5/L18/L25 subcomplex. Contacts the 5S rRNA. Binds to the 5S rRNA independently of L5 and L18.

Its function is as follows. This is one of the proteins that binds to the 5S RNA in the ribosome where it forms part of the central protuberance. The polypeptide is Large ribosomal subunit protein bL25 (Carboxydothermus hydrogenoformans (strain ATCC BAA-161 / DSM 6008 / Z-2901)).